Here is a 246-residue protein sequence, read N- to C-terminus: tRNA (guanine-N(1)-)-methyltransferase (246 aa).

Residues Gly113 and 132–137 (LGDYVL) contribute to the S-adenosyl-L-methionine site.

It belongs to the RNA methyltransferase TrmD family. Homodimer.

Its subcellular location is the cytoplasm. The enzyme catalyses guanosine(37) in tRNA + S-adenosyl-L-methionine = N(1)-methylguanosine(37) in tRNA + S-adenosyl-L-homocysteine + H(+). Specifically methylates guanosine-37 in various tRNAs. The polypeptide is tRNA (guanine-N(1)-)-methyltransferase (Lactiplantibacillus plantarum (strain ATCC BAA-793 / NCIMB 8826 / WCFS1) (Lactobacillus plantarum)).